The sequence spans 434 residues: MQSEAQSPRSSQICSTEPVFGGHQPRRVSHAVDVRWGGQLVTIGGDAPVRVQSMTNTDTADAIGTAIQIKELANAGSELVRITVNTPEAAAAVPAIREQLDRMGVTVPLVGDFHYNGHLLLRDYPGCAESLSKYRINPGNVGQGAKRDTQFAQMIEAAAKYDKPVRIGVNWGSLDQDLLARMMDENGARAQPWDAQSVMYEALIQSAIGSAERAVELGLGRDRIVLSCKVSGVQDLIAVYRELGRRCGFALHLGLTEAGMGSKGIVASTAALGVLLQEGIGDTIRISLTPEPGASRTGEVIVGQEILQTMGLRSFAPMVIACPGCGRTTSTLFQELAMQIQTYLREQMPVWRKEYPGVEKMNVAVMGCIVNGPGESKHANIGISLPGSGENPAAPVFIDGEKVKTLRGERIAEEFQQIVSDYVARNYGRTEALN.

Residues 1 to 15 (MQSEAQSPRSSQICS) are compositionally biased toward polar residues. The segment at 1-24 (MQSEAQSPRSSQICSTEPVFGGHQ) is disordered. Positions 322, 325, 368, and 375 each coordinate [4Fe-4S] cluster.

Belongs to the IspG family. [4Fe-4S] cluster is required as a cofactor.

The enzyme catalyses (2E)-4-hydroxy-3-methylbut-2-enyl diphosphate + oxidized [flavodoxin] + H2O + 2 H(+) = 2-C-methyl-D-erythritol 2,4-cyclic diphosphate + reduced [flavodoxin]. Its pathway is isoprenoid biosynthesis; isopentenyl diphosphate biosynthesis via DXP pathway; isopentenyl diphosphate from 1-deoxy-D-xylulose 5-phosphate: step 5/6. Converts 2C-methyl-D-erythritol 2,4-cyclodiphosphate (ME-2,4cPP) into 1-hydroxy-2-methyl-2-(E)-butenyl 4-diphosphate. In Burkholderia cenocepacia (strain ATCC BAA-245 / DSM 16553 / LMG 16656 / NCTC 13227 / J2315 / CF5610) (Burkholderia cepacia (strain J2315)), this protein is 4-hydroxy-3-methylbut-2-en-1-yl diphosphate synthase (flavodoxin).